We begin with the raw amino-acid sequence, 137 residues long: Large ribosomal subunit protein eL28 (137 aa).

Ser-2 bears the N-acetylserine mark. Residues Lys-58 and Lys-65 each participate in a glycyl lysine isopeptide (Lys-Gly) (interchain with G-Cter in SUMO2) cross-link. The residue at position 115 (Ser-115) is a Phosphoserine.

Belongs to the eukaryotic ribosomal protein eL28 family. As to quaternary structure, component of the large ribosomal subunit.

Its subcellular location is the cytoplasm. Component of the large ribosomal subunit. The ribosome is a large ribonucleoprotein complex responsible for the synthesis of proteins in the cell. This is Large ribosomal subunit protein eL28 (RPL28) from Homo sapiens (Human).